The chain runs to 477 residues: Myosin-binding protein H (477 aa).

The disordered stretch occupies residues Met-1–Ala-73. 2 positions are modified to phosphothreonine: Thr-6 and Thr-26. The Fibronectin type-III 1 domain occupies Ala-73–Asn-168. The Ig-like C2-type 1 domain maps to Pro-172–Asp-260. One can recognise a Fibronectin type-III 2 domain in the interval Pro-269–Ala-364. The Ig-like C2-type 2 domain maps to Pro-382–Asp-466.

It belongs to the immunoglobulin superfamily. MyBP family. Mainly expressed in the skeletal muscle. Slightly expressed in the left atrium and arteria mammaria interna.

In terms of biological role, binds to myosin; probably involved in interaction with thick myofilaments in the A-band. The chain is Myosin-binding protein H (MYBPH) from Homo sapiens (Human).